Here is a 631-residue protein sequence, read N- to C-terminus: Clathrin interactor 1 (631 aa).

The region spanning 24-157 (NVVMNYSEIE…QDDDRLREER (134 aa)) is the ENTH domain. Position 37 (Arg-37) interacts with a 1,2-diacyl-sn-glycero-3-phospho-(1D-myo-inositol-4,5-bisphosphate). An interaction with VTI1B region spans residues 60 to 62 (FMY). An a 1,2-diacyl-sn-glycero-3-phospho-(1D-myo-inositol-4,5-bisphosphate)-binding site is contributed by Arg-75. Interaction with VTI1B regions lie at residues 102–104 (SER) and 150–161 (DDRLREERKKAK). Ser-171, Ser-174, Ser-213, Ser-218, Ser-235, Ser-253, and Ser-307 each carry phosphoserine. The segment at 227 to 339 (FRRKDREDSP…SSGDLVDLFD (113 aa)) is disordered. Residues 230-247 (KDREDSPERCSDSDEEKK) are compositionally biased toward basic and acidic residues. A compositionally biased stretch (polar residues) spans 308–318 (PDQNASTHTPQ). Residue Thr-316 is modified to Phosphothreonine. Over residues 319–331 (SSAKPSVPSSKSS) the composition is skewed to low complexity. Phosphoserine is present on residues Ser-320 and Ser-630.

Belongs to the epsin family. As to quaternary structure, binds clathrin heavy chain and AP-2. Interacts with VTI1B. Interacts with GGA2 (via GAE domain). Interacts with AP1G1 (via GAE domain). Interacts with AP1G2 (via GAE domain).

It is found in the cytoplasm. Its subcellular location is the perinuclear region. The protein localises to the membrane. The protein resides in the cytoplasmic vesicle. It localises to the clathrin-coated vesicle. Functionally, binds to membranes enriched in phosphatidylinositol 4,5-bisphosphate (PtdIns(4,5)P2). May have a role in transport via clathrin-coated vesicles from the trans-Golgi network to endosomes. Stimulates clathrin assembly. The sequence is that of Clathrin interactor 1 (Clint1) from Mus musculus (Mouse).